We begin with the raw amino-acid sequence, 400 residues long: PHD finger protein 24 (400 aa).

Residue Gly2 is the site of N-myristoyl glycine attachment. Positions 29–38 (RDRPSIRRGG) are enriched in basic and acidic residues. Residues 29 to 65 (RDRPSIRRGGELPGSRRGTVEGSVQEVQEEKEAEASA) are disordered. Residue Arg36 is modified to Omega-N-methylarginine. A Phosphoserine modification is found at Ser43. The residue at position 47 (Thr47) is a Phosphothreonine. The residue at position 51 (Ser51) is a Phosphoserine. The PHD-type zinc finger occupies 129-190 (NDEMCDVCEV…TGWSCYYCDN (62 aa)). The residue at position 307 (Arg307) is an Omega-N-methylarginine.

In Mus musculus (Mouse), this protein is PHD finger protein 24.